The sequence spans 643 residues: Threonine--tRNA ligase (643 aa).

Residues M1–Y61 form the TGS domain. The catalytic stretch occupies residues D244 to P535. The Zn(2+) site is built by C335, H386, and H512.

It belongs to the class-II aminoacyl-tRNA synthetase family. As to quaternary structure, homodimer. Requires Zn(2+) as cofactor.

It is found in the cytoplasm. It carries out the reaction tRNA(Thr) + L-threonine + ATP = L-threonyl-tRNA(Thr) + AMP + diphosphate + H(+). Its function is as follows. Catalyzes the attachment of threonine to tRNA(Thr) in a two-step reaction: L-threonine is first activated by ATP to form Thr-AMP and then transferred to the acceptor end of tRNA(Thr). Also edits incorrectly charged L-seryl-tRNA(Thr). The chain is Threonine--tRNA ligase from Buchnera aphidicola subsp. Baizongia pistaciae (strain Bp).